Consider the following 310-residue polypeptide: DNA repair nuclease APEX1 (310 aa).

Positions 1–51 are disordered; the sequence is MPKRAKKNEEGVDGEADNGTAAAKKEKKGKEPEAPILYEDPPEKLTSKDGR. Basic and acidic residues predominate over residues 41-51; it reads PPEKLTSKDGR. Mg(2+)-binding residues include D63 and E89. The active site involves Y164. The Mg(2+) site is built by D203, N205, and D300. The active-site Proton donor/acceptor is the D203.

The protein belongs to the DNA repair enzymes AP/ExoA family. Mg(2+) serves as cofactor. Requires Mn(2+) as cofactor.

The protein localises to the nucleus. The protein resides in the nucleolus. It localises to the nucleus speckle. Its subcellular location is the endoplasmic reticulum. It is found in the cytoplasm. The protein localises to the mitochondrion. It carries out the reaction Exonucleolytic cleavage in the 3'- to 5'-direction to yield nucleoside 5'-phosphates.. Functionally, functions as an apurinic/apyrimidinic (AP) endodeoxyribonuclease in the DNA base excision repair (BER) pathway of DNA lesions induced by oxidative and alkylating agents. Initiates repair of AP sites in DNA by catalyzing hydrolytic incision of the phosphodiester backbone immediately adjacent to the damage, generating a single-strand break with 5'-deoxyribose phosphate and 3'-hydroxyl ends. Has 3'-5' exoribonuclease activity on mismatched deoxyribonucleotides at the 3' termini of nicked or gapped DNA molecules during short-patch BER. May also play a role in the epigenetic regulation of gene expression by participating in DNA demethylation. Required for passage through the mid-blastula transition MBT. May also act as an endoribonuclease involved in the control of single-stranded RNA metabolism. Has no redox activity. Binds DNA and RNA. In Danio rerio (Zebrafish), this protein is DNA repair nuclease APEX1 (apex1).